A 507-amino-acid chain; its full sequence is Arabinose import ATP-binding protein AraG (507 aa).

2 consecutive ABC transporter domains span residues 14 to 249 and 249 to 505; these read LRFN…MVGR and RDIQ…LPRT. 46-53 serves as a coordination point for ATP; the sequence is GENGAGKS.

The protein belongs to the ABC transporter superfamily. Arabinose importer (TC 3.A.1.2.2) family. In terms of assembly, the complex is composed of two ATP-binding proteins (AraG), two transmembrane proteins (AraH) and a solute-binding protein (AraF).

The protein localises to the cell inner membrane. The enzyme catalyses L-arabinose(out) + ATP + H2O = L-arabinose(in) + ADP + phosphate + H(+). In terms of biological role, part of the ABC transporter complex AraFGH involved in arabinose import. Responsible for energy coupling to the transport system. The polypeptide is Arabinose import ATP-binding protein AraG (Pseudomonas syringae pv. syringae (strain B728a)).